The following is a 167-amino-acid chain: Photosystem I assembly protein Ycf3 (167 aa).

3 TPR repeats span residues 35 to 68 (AFSYYRDGMSAQSEGEYAEALANYYEALNLEEDP), 72 to 105 (SFILYNIGLIHASNGEYVKALDYYHKALEANNKL), and 120 to 153 (AVKASEINDLETAQALFHEAAQYWKQAIKLAPSN).

The protein belongs to the Ycf3 family.

The protein resides in the plastid. The protein localises to the chloroplast thylakoid membrane. In terms of biological role, essential for the assembly of the photosystem I (PSI) complex. May act as a chaperone-like factor to guide the assembly of the PSI subunits. The sequence is that of Photosystem I assembly protein Ycf3 from Galdieria sulphuraria (Red alga).